The chain runs to 251 residues: Electron transfer flavoprotein subunit beta, mitochondrial (251 aa).

It belongs to the ETF beta-subunit/FixA family. Heterodimer of an alpha and a beta subunit. FAD serves as cofactor. AMP is required as a cofactor.

The protein localises to the mitochondrion matrix. The electron transfer flavoprotein serves as a specific electron acceptor for several dehydrogenases, including five acyl-CoA dehydrogenases, glutaryl-CoA and sarcosine dehydrogenase. It transfers the electrons to the main mitochondrial respiratory chain via ETF-ubiquinone oxidoreductase (ETF dehydrogenase). Involved in leucine catabolism and in phytol degradation. The chain is Electron transfer flavoprotein subunit beta, mitochondrial (ETFB) from Arabidopsis thaliana (Mouse-ear cress).